Reading from the N-terminus, the 297-residue chain is TATA-box-binding protein (297 aa).

Residues 52–116 (EEQQRQQQQA…ITPATPASES (65 aa)) form a disordered region. Composition is skewed to low complexity over residues 56–78 (RQQQ…QTPQ) and 104–114 (MTPITPATPAS). 2 consecutive repeat copies span residues 123-199 (LQNI…ARVV) and 213-290 (IQNM…YPIL).

This sequence belongs to the TBP family. As to quaternary structure, belongs to the TFIID complex together with the TBP-associated factors (TAFs). Binds DNA as monomer. Post-translationally, the N-terminal domain is extensively phosphorylated.

The protein resides in the nucleus. General transcription factor that functions at the core of the DNA-binding multiprotein factor TFIID. Binding of TFIID to the TATA box is the initial transcriptional step of the pre-initiation complex (PIC), playing a role in the activation of eukaryotic genes transcribed by RNA polymerase II. Members of the TBP family are differentially required to regulate transcription and development during early embryogenesis. Binds to the promoters of select genes. This chain is TATA-box-binding protein, found in Xenopus tropicalis (Western clawed frog).